A 714-amino-acid polypeptide reads, in one-letter code: Fatty acid oxidation complex subunit alpha (714 aa).

Residues 1 to 190 (MEMASVFTLN…KLGLVDDVVP (190 aa)) are enoyl-CoA hydratase. Residues 306 to 714 (APLNSVGILG…FWKTTATDLQ (409 aa)) are 3-hydroxyacyl-CoA dehydrogenase.

In the N-terminal section; belongs to the enoyl-CoA hydratase/isomerase family. This sequence in the central section; belongs to the 3-hydroxyacyl-CoA dehydrogenase family. In terms of assembly, heterotetramer of two alpha chains (FadJ) and two beta chains (FadI).

Its subcellular location is the cytoplasm. The catalysed reaction is a (3S)-3-hydroxyacyl-CoA = a (2E)-enoyl-CoA + H2O. It carries out the reaction a 4-saturated-(3S)-3-hydroxyacyl-CoA = a (3E)-enoyl-CoA + H2O. The enzyme catalyses a (3S)-3-hydroxyacyl-CoA + NAD(+) = a 3-oxoacyl-CoA + NADH + H(+). It catalyses the reaction (3S)-3-hydroxybutanoyl-CoA = (3R)-3-hydroxybutanoyl-CoA. It participates in lipid metabolism; fatty acid beta-oxidation. Its function is as follows. Catalyzes the formation of a hydroxyacyl-CoA by addition of water on enoyl-CoA. Also exhibits 3-hydroxyacyl-CoA epimerase and 3-hydroxyacyl-CoA dehydrogenase activities. The protein is Fatty acid oxidation complex subunit alpha of Escherichia coli (strain SE11).